Reading from the N-terminus, the 900-residue chain is Bifunctional uridylyltransferase/uridylyl-removing enzyme (900 aa).

The uridylyltransferase stretch occupies residues 1-342 (MPQVDPELFD…PCEQPVQIQP (342 aa)). Residues 343-705 (LNSRFQLRDG…TTQREFESGS (363 aa)) form a uridylyl-removing region. One can recognise an HD domain in the interval 461 to 583 (VDAHTLNLIK…VGDQTHLDYL (123 aa)). 2 ACT domains span residues 706–789 (QIFI…IIQR) and 816–891 (VLEV…DNGR).

The protein belongs to the GlnD family. Mg(2+) is required as a cofactor.

The catalysed reaction is [protein-PII]-L-tyrosine + UTP = [protein-PII]-uridylyl-L-tyrosine + diphosphate. It carries out the reaction [protein-PII]-uridylyl-L-tyrosine + H2O = [protein-PII]-L-tyrosine + UMP + H(+). Its activity is regulated as follows. Uridylyltransferase (UTase) activity is inhibited by glutamine, while glutamine activates uridylyl-removing (UR) activity. In terms of biological role, modifies, by uridylylation and deuridylylation, the PII regulatory proteins (GlnB and homologs), in response to the nitrogen status of the cell that GlnD senses through the glutamine level. Under low glutamine levels, catalyzes the conversion of the PII proteins and UTP to PII-UMP and PPi, while under higher glutamine levels, GlnD hydrolyzes PII-UMP to PII and UMP (deuridylylation). Thus, controls uridylylation state and activity of the PII proteins, and plays an important role in the regulation of nitrogen assimilation and metabolism. The chain is Bifunctional uridylyltransferase/uridylyl-removing enzyme from Pseudomonas aeruginosa (strain ATCC 15692 / DSM 22644 / CIP 104116 / JCM 14847 / LMG 12228 / 1C / PRS 101 / PAO1).